Consider the following 86-residue polypeptide: Acyl carrier protein (86 aa).

The region spanning 2-82 (ATVFERVKKV…AVVDYLKSKG (81 aa)) is the Carrier domain. Serine 37 bears the O-(pantetheine 4'-phosphoryl)serine mark.

It belongs to the acyl carrier protein (ACP) family. In terms of processing, 4'-phosphopantetheine is transferred from CoA to a specific serine of apo-ACP by AcpS. This modification is essential for activity because fatty acids are bound in thioester linkage to the sulfhydryl of the prosthetic group.

Its subcellular location is the cytoplasm. It participates in lipid metabolism; fatty acid biosynthesis. Carrier of the growing fatty acid chain in fatty acid biosynthesis. The protein is Acyl carrier protein of Dehalococcoides mccartyi (strain ATCC BAA-2100 / JCM 16839 / KCTC 5957 / BAV1).